Reading from the N-terminus, the 390-residue chain is Flap endonuclease 1 (390 aa).

Residues 1-111 (MGIKGLAKLL…GELLKRREKR (111 aa)) are N-domain. Asp34 is a binding site for Mg(2+). DNA-binding residues include Arg47 and Arg77. Positions 93, 165, 167, 186, and 188 each coordinate Mg(2+). The segment at 129-260 (EQDKQSKRLV…KTALKLIREH (132 aa)) is I-domain. Position 165 (Glu165) interacts with DNA. 2 residues coordinate DNA: Gly238 and Asp240. Position 240 (Asp240) interacts with Mg(2+). The interval 342–390 (KPQSRMDSFFKVKANPEGDKKKAEKRKAELAASRGKGKKGKGGGGFKKK) is disordered. The segment at 343-351 (PQSRMDSFF) is interaction with PCNA. The span at 349-370 (SFFKVKANPEGDKKKAEKRKAE) shows a compositional bias: basic and acidic residues. The segment covering 376–390 (GKGKKGKGGGGFKKK) has biased composition (basic residues).

Belongs to the XPG/RAD2 endonuclease family. FEN1 subfamily. As to quaternary structure, interacts with PCNA. Three molecules of FEN1 bind to one PCNA trimer with each molecule binding to one PCNA monomer. PCNA stimulates the nuclease activity without altering cleavage specificity. The cofactor is Mg(2+). Post-translationally, phosphorylated. Phosphorylation upon DNA damage induces relocalization to the nuclear plasma.

The protein resides in the nucleus. It is found in the nucleolus. The protein localises to the nucleoplasm. It localises to the mitochondrion. Structure-specific nuclease with 5'-flap endonuclease and 5'-3' exonuclease activities involved in DNA replication and repair. During DNA replication, cleaves the 5'-overhanging flap structure that is generated by displacement synthesis when DNA polymerase encounters the 5'-end of a downstream Okazaki fragment. It enters the flap from the 5'-end and then tracks to cleave the flap base, leaving a nick for ligation. Also involved in the long patch base excision repair (LP-BER) pathway, by cleaving within the apurinic/apyrimidinic (AP) site-terminated flap. Acts as a genome stabilization factor that prevents flaps from equilibrating into structures that lead to duplications and deletions. Also possesses 5'-3' exonuclease activity on nicked or gapped double-stranded DNA, and exhibits RNase H activity. Also involved in replication and repair of rDNA and in repairing mitochondrial DNA. This chain is Flap endonuclease 1, found in Thalassiosira pseudonana (Marine diatom).